The chain runs to 591 residues: Formate--tetrahydrofolate ligase (591 aa).

Residue 74–81 participates in ATP binding; sequence TPLGEGKS.

Belongs to the formate--tetrahydrofolate ligase family.

The catalysed reaction is (6S)-5,6,7,8-tetrahydrofolate + formate + ATP = (6R)-10-formyltetrahydrofolate + ADP + phosphate. It functions in the pathway one-carbon metabolism; tetrahydrofolate interconversion. In Desulfovibrio desulfuricans (strain ATCC 27774 / DSM 6949 / MB), this protein is Formate--tetrahydrofolate ligase.